Consider the following 302-residue polypeptide: Acetylglutamate kinase (302 aa).

Substrate is bound by residues 68 to 69 (GG), R90, and N195.

The protein belongs to the acetylglutamate kinase family. ArgB subfamily.

It is found in the cytoplasm. It catalyses the reaction N-acetyl-L-glutamate + ATP = N-acetyl-L-glutamyl 5-phosphate + ADP. It functions in the pathway amino-acid biosynthesis; L-arginine biosynthesis; N(2)-acetyl-L-ornithine from L-glutamate: step 2/4. Catalyzes the ATP-dependent phosphorylation of N-acetyl-L-glutamate. The chain is Acetylglutamate kinase from Marinomonas sp. (strain MWYL1).